Here is a 1251-residue protein sequence, read N- to C-terminus: Botulinum neurotoxin type E (1251 aa).

His-212 contributes to the Zn(2+) binding site. Glu-213 is a catalytic residue. Residues His-216 and Glu-251 each contribute to the Zn(2+) site. A disulfide bridge connects residues Cys-412 and Cys-426. A translocation domain (TD) region spans residues 423–819; it reads KSICIEINNG…ELNSMVIDTL (397 aa). A belt region spans residues 466-515; that stretch reads NDLDQVILNFNSESAPGLSDEKLNLTIQNDAYIPKYDSNGTSDIEQHDVN. Residues 845 to 1067 form an N-terminus of receptor binding domain (N-RBD) region; sequence KRIKSSSVLN…EIQTLYNNEP (223 aa). The C-terminus of receptor binding domain (C-RBD) stretch occupies residues 1068–1251; the sequence is NANILKDFWG…ISEEHGWQEK (184 aa). Residues 1221 to 1224 carry the Host ganglioside-binding motif motif; sequence STWY.

It belongs to the peptidase M27 family. As to quaternary structure, heterodimer; disulfide-linked heterodimer of a light chain (LC) and a heavy chain (HC). The LC has the proteolytic/pharmacological activity, while the N- and C-terminal of the HC mediate channel formation and toxin binding, respectively. Interacts with host synaptic vesicle glycoproteins SV2A and SV2B which probably serve as coreceptors. It depends on Zn(2+) as a cofactor.

Its subcellular location is the secreted. The protein localises to the host cytoplasm. The protein resides in the host cytosol. It localises to the host synapse. It is found in the host presynaptic cell membrane. Its subcellular location is the host cytoplasmic vesicle. The protein localises to the host secretory vesicle. The protein resides in the host synaptic vesicle membrane. The enzyme catalyses Limited hydrolysis of proteins of the neuroexocytosis apparatus, synaptobrevins, SNAP25 or syntaxin. No detected action on small molecule substrates.. Botulinum toxin causes flaccid paralysis by inhibiting neurotransmitter (acetylcholine) release from the presynaptic membranes of nerve terminals of eukaryotic host skeletal and autonomic nervous system, with frequent heart or respiratory failure. Precursor of botulinum neurotoxin E which has 2 coreceptors; complex polysialylated gangliosides found on neural tissue and specific membrane-anchored proteins found in synaptic vesicles. Receptor proteins are exposed on host presynaptic cell membrane during neurotransmitter release, when the toxin heavy chain (HC) binds to them. Upon synaptic vesicle recycling the toxin is taken up via the endocytic pathway. When the pH of the toxin-containing endosome drops a structural rearrangement occurs so that the N-terminus of the HC forms pores that allows the light chain (LC) to translocate into the cytosol. Once in the cytosol the disulfide bond linking the 2 subunits is reduced and LC cleaves its target protein on synaptic vesicles, preventing their fusion with the cytoplasmic membrane and thus neurotransmitter release. Functionally, has proteolytic activity. After translocation into the eukaryotic host cytosol, LC hydrolyzes the '180-Arg-|-Ile-181' bond in SNAP25, blocking neurotransmitter release. In terms of biological role, responsible for host epithelial cell transcytosis, host nerve cell targeting and translocation of light chain (LC) into host cytosol. Composed of 3 subdomains; the translocation domain (TD), and N-terminus and C-terminus of the receptor-binding domain (RBD). The RBD is responsible for the adherence of the toxin to the cell surface. It simultaneously recognizes 2 coreceptors; host polysialated gangliosides and the receptor proteins SV2A and SV2B in close proximity on host synaptic vesicles. Interaction with SV2 proteins requires SV2 glycosylation. The N-terminus of the TD wraps an extended belt around the perimeter of the LC, protecting Zn(2+) in the active site; it may also prevent premature LC dissociation from the translocation channel and protect toxin prior to translocation. The TD inserts into synaptic vesicle membrane to allow translocation into the host cytosol. Binds ganglioside GD1a in vitro. The sequence is that of Botulinum neurotoxin type E from Clostridium butyricum.